A 68-amino-acid chain; its full sequence is Small ribosomal subunit protein bS21 (68 aa).

The segment at 39 to 68 (PPSVKRVRKKQESERRHRKERAMRRRMMEE) is disordered. The span at 54–68 (RHRKERAMRRRMMEE) shows a compositional bias: basic residues.

It belongs to the bacterial ribosomal protein bS21 family.

The chain is Small ribosomal subunit protein bS21 from Orientia tsutsugamushi (strain Boryong) (Rickettsia tsutsugamushi).